Here is a 449-residue protein sequence, read N- to C-terminus: 23S rRNA (uracil(1939)-C(5))-methyltransferase RlmD (449 aa).

The region spanning 1 to 66 (MGRSRYHNKL…AKFDEAKVVE (66 aa)) is the TRAM domain. Positions 79, 85, 88, and 169 each coordinate [4Fe-4S] cluster. Gln280, Phe309, Asn314, Glu330, Asn357, and Asp379 together coordinate S-adenosyl-L-methionine. Residue Cys405 is the Nucleophile of the active site.

This sequence belongs to the class I-like SAM-binding methyltransferase superfamily. RNA M5U methyltransferase family. RlmD subfamily.

The catalysed reaction is uridine(1939) in 23S rRNA + S-adenosyl-L-methionine = 5-methyluridine(1939) in 23S rRNA + S-adenosyl-L-homocysteine + H(+). In terms of biological role, catalyzes the formation of 5-methyl-uridine at position 1939 (m5U1939) in 23S rRNA. In Francisella tularensis subsp. holarctica (strain LVS), this protein is 23S rRNA (uracil(1939)-C(5))-methyltransferase RlmD.